We begin with the raw amino-acid sequence, 340 residues long: Protein B17 (340 aa).

This sequence belongs to the orthopoxvirus B17 protein family.

This Variola virus (isolate Human/India/Ind3/1967) (VARV) protein is Protein B17.